The following is a 1921-amino-acid chain: MWTNVFRIGGLHNVSWFQFLPSETELNPGFDRSSRAEQNEVATYLVLSSHLRLQKEGFLTTWTNSFVGPWDPSQGLYNPDEKIKLWLFLPGRHSSISDKAQAAVSKLRVVASGIWVAPGDSEEISVAFSQSLRNCIERALSGISYMRFGDVFSKFSPQSEEYLRRGQPTVEFIFAATEEAVFVHVIISAKNVRTLSSGDAERMLRSSLKNSSYRLPAFRKCLGLAKSEDNRLCYINTSHRPMLFPPVIVSPHGMRGSLTGFCPNDLVKQVYFSSGNLKTSTGYVGLPSHIGRGSRLINGNHCYVEVTLGCCQNRNDNTSQANSTFAVNLPHNQCPEPSVGSKDHRKGQSDLSSVCEKKFIYPAEAVLVPILQSAFAKFSLKRAGDFDCLGASENKSDGFYEKNGYNSSGSSRNSSISSTSSASSGSGWRMTSRTGDLDADADSLTCRQSGLTCNDDRLKMGSKRPRTGMAESFGQVGIENDQIGWDWDADDDDDDREVGMDIKALLSEFGDFGDFFENDALPFGEPPGTAESHVLVFPPDSADVGSSPVDMMDVSDQIVLPVGFSSFESFNPVPPIIDECLIKSQEVLHSSITSVPSNQMSISSTGEFDHLLKAEAMMTFAPEYGAVEAPMSEISSTFFKSPYLPKSHKVESSNSRTSNYVYGATPPTTDSDGAGDMILFGSKSCIGNNAGRTLYHSREHYTQVEGRKGRHDKLPTVISDNSSTKEGVSQSIHSKHSAANAVKVVQGKKTDGISAVVSTLLSSKTLLATDVGSVMFQAFMCRMRHIITSSKHSSPVSLTRLSGNFFLNQLSNEPSTLTDNISARNEIYKKDIPTRIAGDFDGGMLDSHMSAPVGVWRTVSVPKTAKPASSPNIEAGSSLPHSSFSEDSLLSYGQRQPLQDLLDGIALLVQQATSFVDLALDSDCGDGPYGWLALEELWRRELSCGPSAGHAGCGGTLASCHSLDIAGVKLVDPLSAEVFPSSVITLLQSDIKTALKSAFGQSDGPLSVTDWCKGRNQSGDGGSISEGFTAESALSEVNGVNISDDFIIDKYFGKQAVSNAIDGGKGDETAQSQDIYSSELLRPTLFVLPSPAILVGYQDDWLKISTNSLTHWEKAPFEPYALPKSINYAVVCPDIDPLTCAATDFFQQLGTGESTSLSFVKEVMLKHDRNWLGTHLPQSLGNQMEKDVGRLSSSGFVLLDCPQSMKIESNNTSLLGSLSDYFLSLSNGWNVNSYLKSLSKALKGLKLGSGLYTNQKEGSGSPCVVVYIVCPFPDPSAVLRTIVESSIALGSVIQSDRDRRSILNSQVARAFSSSTAVDEASISHIPVLSGFSVPKLVLQVVSVDSIFRITSPSFNELVILKDTAFSVYNKARRISRGMPNDAFFSSSLPSRSSSALTPMNSISGIWKDCGGSRMTGSTHPRDGEIDVSLRTSGWDTSTSWQIPRSGGLSCDPNRNGDFYLNDEIFYLFEPLFILSEPGSVERGVSPTFTSLGSESSKPIPEDGGRGSGPGMNSMEGITSGSSSQGDVSQLEGKAIPSLHCCYGWTEDWRWLVSIWTDARVLQQGCQILQACSSPDNGSFKPRDFVITRIGNFFELEYQEWQKAIYSAGGPEIKKWPIQLRRSAPSGIATNSNGSSLQQQDLSLIQERASSTSTLYSSHSKQSTFVKGSMGQSAGRKQIMGGQTISGTPRGLFQWVHSISFASISLDHSLHFVLPAELVSAGGGQSSTGMSSVNYIEGFTPVKSLGSTAFSYMMIPSPNMRFLHPSPLQLPTCLTAESPPLAHLLHSKGYAIPLSTGFVVSKAVPSMRKDSRINVKEEWPSVLSVSLIDYYGGYDNAHDKILQGIVKQGGGTKETRDFEVESHLILESIAAELHALSWMTVSPAYLDRRTALPFHCDMVLRLRRLLHFADKEVSRIPDKTGV.

Residues lysine 220 and lysine 226 each participate in a glycyl lysine isopeptide (Lys-Gly) (interchain with G-Cter in ubiquitin) cross-link. 3 disordered regions span residues 400-434 (YEKN…TSRT), 702-724 (TQVE…NSST), and 1485-1528 (SPTF…GDVS). The segment covering 407 to 427 (SSGSSRNSSISSTSSASSGSG) has biased composition (low complexity). Composition is skewed to polar residues over residues 1486-1496 (PTFTSLGSESS) and 1515-1527 (EGIT…QGDV).

Belongs to the Mediator complex subunit 13 family. As to quaternary structure, component of the Mediator complex. Interacts with CYCC1-2 (CDK8 homolog). In terms of tissue distribution, ubiquitous. Highest expression in the shoot apex.

It is found in the nucleus. Functionally, component of the Mediator complex, a coactivator involved in the regulated transcription of nearly all RNA polymerase II-dependent genes. Mediator functions as a bridge to convey information from gene-specific regulatory proteins to the basal RNA polymerase II transcription machinery. The Mediator complex, having a compact conformation in its free form, is recruited to promoters by direct interactions with regulatory proteins and serves for the assembly of a functional preinitiation complex with RNA polymerase II and the general transcription factors. Acts closely together with MAB12. Involved in the regulation of embryo patterning and cotyledon organogenesis. May act through transient repression of specific genes such as the ones responsive to auxin. The polypeptide is Mediator of RNA polymerase II transcription subunit 13 (MED13) (Arabidopsis thaliana (Mouse-ear cress)).